We begin with the raw amino-acid sequence, 618 residues long: DNA mismatch repair protein MutL (618 aa).

Residues 367–381 are compositionally biased toward low complexity; it reads EPTAAREPATPRYSG. Residues 367 to 402 form a disordered region; it reads EPTAAREPATPRYSGGASGGNGGRQSAGGWPHAQPG. Gly residues predominate over residues 382–392; that stretch reads GASGGNGGRQS.

This sequence belongs to the DNA mismatch repair MutL/HexB family.

Its function is as follows. This protein is involved in the repair of mismatches in DNA. It is required for dam-dependent methyl-directed DNA mismatch repair. May act as a 'molecular matchmaker', a protein that promotes the formation of a stable complex between two or more DNA-binding proteins in an ATP-dependent manner without itself being part of a final effector complex. The chain is DNA mismatch repair protein MutL from Salmonella heidelberg (strain SL476).